Reading from the N-terminus, the 413-residue chain is Putative acid phosphatase 11 (413 aa).

His35 functions as the Nucleophile in the catalytic mechanism. Asp315 functions as the Proton donor in the catalytic mechanism. The cysteines at positions 381 and 387 are disulfide-linked.

Belongs to the histidine acid phosphatase family.

It carries out the reaction a phosphate monoester + H2O = an alcohol + phosphate. In Caenorhabditis elegans, this protein is Putative acid phosphatase 11 (pho-11).